Consider the following 155-residue polypeptide: Endoribonuclease YbeY (155 aa).

Positions 114, 118, and 124 each coordinate Zn(2+).

The protein belongs to the endoribonuclease YbeY family. Zn(2+) serves as cofactor.

It is found in the cytoplasm. In terms of biological role, single strand-specific metallo-endoribonuclease involved in late-stage 70S ribosome quality control and in maturation of the 3' terminus of the 16S rRNA. The polypeptide is Endoribonuclease YbeY (Proteus mirabilis (strain HI4320)).